The primary structure comprises 693 residues: Cyclin-dependent kinase G-1 (693 aa).

A compositionally biased stretch (gly residues) spans 1–10 (MAAGSHGGYR). 2 disordered regions span residues 1–148 (MAAG…ARDP) and 236–308 (KKKK…DDYP). A compositionally biased stretch (basic and acidic residues) spans 13 to 24 (EVAREREHDVGV). Positions 26-39 (RRSKEHYHHRHPSR) are enriched in basic residues. Composition is skewed to basic and acidic residues over residues 40–54 (HRDS…RSGG), 75–87 (RPSE…REPG), and 97–122 (RSGE…EEAK). Residues 268 to 284 (SVRSSSRSSDSGVLQGS) are compositionally biased toward low complexity. Over residues 287–304 (RDLEVEKGDNIDVEKAAD) the composition is skewed to basic and acidic residues. Residues 349 to 640 (FERLNTINEG…AEDALNHEWF (292 aa)) enclose the Protein kinase domain. Residues 355-363 (INEGTYGVV) and lysine 378 each bind ATP. Threonine 359 is subject to Phosphothreonine. Tyrosine 360 bears the Phosphotyrosine mark. Catalysis depends on aspartate 473, which acts as the Proton acceptor. Serine 500 is subject to Phosphoserine. Residue threonine 506 is modified to Phosphothreonine. The tract at residues 664 to 693 (RFKKHMKSPDPLEEQWMKEQGNNGDRGLFG) is disordered.

This sequence belongs to the protein kinase superfamily. CMGC Ser/Thr protein kinase family. CDC2/CDKX subfamily.

The enzyme catalyses L-seryl-[protein] + ATP = O-phospho-L-seryl-[protein] + ADP + H(+). The catalysed reaction is L-threonyl-[protein] + ATP = O-phospho-L-threonyl-[protein] + ADP + H(+). It catalyses the reaction [DNA-directed RNA polymerase] + ATP = phospho-[DNA-directed RNA polymerase] + ADP + H(+). This chain is Cyclin-dependent kinase G-1 (CDKG-1), found in Oryza sativa subsp. indica (Rice).